Consider the following 205-residue polypeptide: Syndecan 4-B (205 aa).

Positions 1–17 (MNRLLLLLALVLSGVAA) are cleaved as a signal peptide. Residues 18-162 (ESIRETETMD…FFQRTEVIVA (145 aa)) are Extracellular-facing. A disordered region spans residues 26–113 (MDPTSMLEYE…HDFDETKTGR (88 aa)). 3 O-linked (Xyl...) (glycosaminoglycan) serine glycosylation sites follow: Ser37, Ser73, and Ser75. Residues 44–94 (VFVDEDDDDDYEDGVDYEIDSESDNDEDYSGSGDDDFDDEDNVEDEDEEET) show a composition bias toward acidic residues. The segment covering 102–113 (PEHDFDETKTGR) has biased composition (basic and acidic residues). A helical transmembrane segment spans residues 163-183 (IIAGTLVGLVVAVSFIVFLVI). Topologically, residues 184-205 (RRNQNGDLVKKPIYKKTSTMEV) are cytoplasmic.

Belongs to the syndecan proteoglycan family. Interacts with the Wnt receptor fzd7 and its signal transducer dvl2/dsh. O-glycosylated; contains both chondroitin sulfate and heparan sulfate. Ser-37, Ser-73 and Ser-75 can all be modified by either chondroitin sulfate or heparan sulfate, and the protein exists in forms that contain only chondroitin sulfate, only heparan sulfate and both chondroitin sulfate and heparan sulfate. As to expression, expressed in the animal hemisphere from the 4-cell to the blastula stage. During gastrulation, expressed in the involuting dorsal mesoderm and ectoderm. After involution, localized mainly to the anterior neuroectoderm. At later stages, expressed in the brain, branchial arches, pronephros, tailbud, and at low levels in the somites.

Its subcellular location is the membrane. Functionally, cell surface proteoglycan. Regulates non-canonical Wnt signaling, being necessary and sufficient for fibronectrin-mediated translocation of dvl2/dsh to the plasma membrane. Required for proper convergent extension movements during gastrulation, which shape the neural plate, and for subsequent neural tube closure. The protein is Syndecan 4-B (sdc4-b) of Xenopus laevis (African clawed frog).